A 524-amino-acid polypeptide reads, in one-letter code: Decreased expression in renal and prostate cancer protein (524 aa).

Basic and acidic residues predominate over residues 1-12; sequence MKEPRIFPRERP. 2 disordered regions span residues 1–43 and 64–252; these read MKEP…TGHP and PFPR…LDAR. A compositionally biased stretch (low complexity) spans 129–148; the sequence is LNPRTGALPGPGPLSNPRLG. The segment covering 163-181 has biased composition (gly residues); that stretch reads GLLGAGPDPRGGGPMGPGS. Residue Ser302 is modified to Phosphoserine. Positions 312–323 are enriched in low complexity; that stretch reads PMGPNSGPSSRG. The interval 312-332 is disordered; it reads PMGPNSGPSSRGIGLPGPNPS. At Arg364 the chain carries Asymmetric dimethylarginine. Arg387 carries the omega-N-methylarginine modification. The residue at position 423 (Ser423) is a Phosphoserine.

It belongs to the DERPC family. Ubiquitously expressed, with abundant expression in kidney, skeletal muscle, testis, liver, ovary, and heart and moderate expression in prostate. Expression is significantly reduced in renal and prostate tumors. No differential expression in breast cancer cells, between lobular carcinoma and normal lobules.

Its subcellular location is the nucleus. Functionally, potential tumor suppressor. Inhibits prostate tumor cell growth, when overexpressed. This chain is Decreased expression in renal and prostate cancer protein, found in Homo sapiens (Human).